Reading from the N-terminus, the 160-residue chain is Dihydrofolate reductase (160 aa).

Positions 1-160 constitute a DHFR domain; sequence MVKAIWAMDQ…KVAYYHKIAR (160 aa). 5-7 is a substrate binding site; that stretch reads IWA. NADP(+) contacts are provided by residues 6-7 and 14-19; these read WA and IGNGNS. Residues E27 and R32 each contribute to the substrate site. Position 43 to 46 (43 to 46) interacts with NADP(+); sequence GSAT. Residue R57 participates in substrate binding. NADP(+) is bound by residues 62-65 and 101-106; these read LTRN and CGGAQV. Substrate is bound at residue S120.

It belongs to the dihydrofolate reductase family.

The catalysed reaction is (6S)-5,6,7,8-tetrahydrofolate + NADP(+) = 7,8-dihydrofolate + NADPH + H(+). It participates in cofactor biosynthesis; tetrahydrofolate biosynthesis; 5,6,7,8-tetrahydrofolate from 7,8-dihydrofolate: step 1/1. In terms of biological role, key enzyme in folate metabolism. Catalyzes an essential reaction for de novo glycine and purine synthesis, and for DNA precursor synthesis. The sequence is that of Dihydrofolate reductase (folA) from Mycoplasma pneumoniae (strain ATCC 29342 / M129 / Subtype 1) (Mycoplasmoides pneumoniae).